A 145-amino-acid polypeptide reads, in one-letter code: Peptide methionine sulfoxide reductase MsrB (145 aa).

The region spanning 4-127 (SDELKQRIGD…NSAALKFIPY (124 aa)) is the MsrB domain. The active-site Nucleophile is Cys116.

Belongs to the MsrB Met sulfoxide reductase family.

The catalysed reaction is L-methionyl-[protein] + [thioredoxin]-disulfide + H2O = L-methionyl-(R)-S-oxide-[protein] + [thioredoxin]-dithiol. The polypeptide is Peptide methionine sulfoxide reductase MsrB (Streptococcus pyogenes serotype M1).